We begin with the raw amino-acid sequence, 845 residues long: Beta-mannosidase B (845 aa).

The interval 1 to 20 (MSKLQQFPLSKGWSFRDSED) is disordered. Residue Asn252 is glycosylated (N-linked (GlcNAc...) asparagine). The active-site Proton donor is the Glu432. N-linked (GlcNAc...) asparagine glycans are attached at residues Asn717 and Asn723.

The protein belongs to the glycosyl hydrolase 2 family. Beta-mannosidase B subfamily.

The enzyme catalyses Hydrolysis of terminal, non-reducing beta-D-mannose residues in beta-D-mannosides.. The protein operates within glycan metabolism; N-glycan degradation. Its function is as follows. Exoglycosidase that cleaves the single beta-linked mannose residue from the non-reducing end of beta-mannosidic oligosaccharides of various complexity and length. Prefers mannobiose over mannotriose and has no activity against polymeric mannan. Is also severely restricted by galactosyl substitutions at the +1 subsite. The protein is Beta-mannosidase B (mndB) of Neosartorya fischeri (strain ATCC 1020 / DSM 3700 / CBS 544.65 / FGSC A1164 / JCM 1740 / NRRL 181 / WB 181) (Aspergillus fischerianus).